We begin with the raw amino-acid sequence, 506 residues long: Chaperone SurA (506 aa).

An N-terminal signal peptide occupies residues 1–29 (MMRRLHSSRRFSGSLLALALGLALPLAHA). 2 PpiC domains span residues 219-320 (PVML…KVLQ) and 351-450 (VTQT…QVLE).

It localises to the periplasm. It carries out the reaction [protein]-peptidylproline (omega=180) = [protein]-peptidylproline (omega=0). Chaperone involved in the correct folding and assembly of outer membrane proteins. Recognizes specific patterns of aromatic residues and the orientation of their side chains, which are found more frequently in integral outer membrane proteins. May act in both early periplasmic and late outer membrane-associated steps of protein maturation. This chain is Chaperone SurA, found in Bordetella avium (strain 197N).